The following is a 155-amino-acid chain: Small ribosomal subunit protein uS17 (155 aa).

Ala-2 is modified (N-acetylalanine).

This sequence belongs to the universal ribosomal protein uS17 family.

The protein is Small ribosomal subunit protein uS17 of Drosophila yakuba (Fruit fly).